The following is a 220-amino-acid chain: Fructose-6-phosphate aldolase 1 (220 aa).

K85 functions as the Schiff-base intermediate with substrate in the catalytic mechanism.

It belongs to the transaldolase family. Type 3A subfamily. Homodecamer. Five subunits are arranged as a pentamer, and two ring-like pentamers pack like a donut to form the decamer.

The protein resides in the cytoplasm. The enzyme catalyses beta-D-fructose 6-phosphate = dihydroxyacetone + D-glyceraldehyde 3-phosphate. Its activity is regulated as follows. Inhibited by glycerol, inorganic phosphate and arabinose 5-phosphate. In terms of biological role, catalyzes the reversible formation of fructose 6-phosphate from dihydroxyacetone (DHA) and D-glyceraldehyde 3-phosphate via an aldolization reaction. Can utilize several aldehydes as acceptor compounds in vitro, and hydroxyacetone (HA) or 1-hydroxy-butan-2-one as alternative donor substrate. Is also able to catalyze the direct stereoselective self-aldol addition of glycolaldehyde to furnish D-(-)-threose, and cross-aldol reactions of glycolaldehyde to other aldehyde acceptors. Is not able to cleave fructose, fructose 1-phosphate, glucose 6-phosphate, sedoheptulose 1,7-bisphosphate, xylulose 5-phosphate, ribulose 5-phosphate, and fructose 1,6-bisphosphate; cannot use dihydroxyacetone phosphate as donor compound nor D-glyceraldehyde as acceptor. Does not display transaldolase activity. This chain is Fructose-6-phosphate aldolase 1 (fsaA), found in Escherichia coli (strain K12).